We begin with the raw amino-acid sequence, 143 residues long: Endoribonuclease YbeY (143 aa).

Residues H109, H113, and D119 each coordinate Zn(2+).

Belongs to the endoribonuclease YbeY family. The cofactor is Zn(2+).

The protein localises to the cytoplasm. Single strand-specific metallo-endoribonuclease involved in late-stage 70S ribosome quality control and in maturation of the 3' terminus of the 16S rRNA. The sequence is that of Endoribonuclease YbeY from Christiangramia forsetii (strain DSM 17595 / CGMCC 1.15422 / KT0803) (Gramella forsetii).